We begin with the raw amino-acid sequence, 243 residues long: LexA repressor 2 (243 aa).

The segment at residues 48–68 is a DNA-binding region (H-T-H motif); the sequence is IREIGDAVGLTSTSSVAHQLR. Catalysis depends on for autocatalytic cleavage activity residues serine 167 and lysine 204.

Belongs to the peptidase S24 family. Homodimer.

The catalysed reaction is Hydrolysis of Ala-|-Gly bond in repressor LexA.. Its function is as follows. Represses a number of genes involved in the response to DNA damage (SOS response), including recA and lexA. In the presence of single-stranded DNA, RecA interacts with LexA causing an autocatalytic cleavage which disrupts the DNA-binding part of LexA, leading to derepression of the SOS regulon and eventually DNA repair. This Nocardia farcinica (strain IFM 10152) protein is LexA repressor 2.